The following is a 310-amino-acid chain: tRNA uridine(34) hydroxylase (310 aa).

The Rhodanese domain maps to 124 to 218 (SDPEVLLIDT…YFEEVPQEES (95 aa)). The active-site Cysteine persulfide intermediate is C178.

It belongs to the TrhO family.

It carries out the reaction uridine(34) in tRNA + AH2 + O2 = 5-hydroxyuridine(34) in tRNA + A + H2O. Catalyzes oxygen-dependent 5-hydroxyuridine (ho5U) modification at position 34 in tRNAs. In Pseudomonas putida (strain W619), this protein is tRNA uridine(34) hydroxylase.